Consider the following 283-residue polypeptide: Bifunctional protein FolD (283 aa).

NADP(+) contacts are provided by residues 166-168, serine 191, and isoleucine 232; that span reads GRS.

The protein belongs to the tetrahydrofolate dehydrogenase/cyclohydrolase family. As to quaternary structure, homodimer.

It carries out the reaction (6R)-5,10-methylene-5,6,7,8-tetrahydrofolate + NADP(+) = (6R)-5,10-methenyltetrahydrofolate + NADPH. It catalyses the reaction (6R)-5,10-methenyltetrahydrofolate + H2O = (6R)-10-formyltetrahydrofolate + H(+). Its pathway is one-carbon metabolism; tetrahydrofolate interconversion. Catalyzes the oxidation of 5,10-methylenetetrahydrofolate to 5,10-methenyltetrahydrofolate and then the hydrolysis of 5,10-methenyltetrahydrofolate to 10-formyltetrahydrofolate. This is Bifunctional protein FolD from Rickettsia bellii (strain RML369-C).